The sequence spans 185 residues: Lipid A acyltransferase PagP (185 aa).

The signal sequence occupies residues 1 to 14 (MKLKPVLYLLMLLG). Cys15 carries N-palmitoyl cysteine lipidation. The S-diacylglycerol cysteine moiety is linked to residue Cys15. Active-site residues include His57, Asp100, and Ser101.

The protein belongs to the lipid A palmitoyltransferase family. Homodimer.

It localises to the cell outer membrane. It carries out the reaction a lipid A + a 1,2-diacyl-sn-glycero-3-phosphocholine = a hepta-acyl lipid A + a 2-acyl-sn-glycero-3-phosphocholine. The enzyme catalyses a lipid IVA + a 1,2-diacyl-sn-glycero-3-phosphocholine = a lipid IVB + a 2-acyl-sn-glycero-3-phosphocholine. The catalysed reaction is a lipid IIA + a 1,2-diacyl-sn-glycero-3-phosphocholine = a lipid IIB + a 2-acyl-sn-glycero-3-phosphocholine. Its function is as follows. Transfers a fatty acid residue from the sn-1 position of a phospholipid to the N-linked hydroxyfatty acid chain on the proximal unit of lipid A or its precursors. This Erwinia sp. (strain Ejp617) protein is Lipid A acyltransferase PagP.